We begin with the raw amino-acid sequence, 388 residues long: Xylose isomerase (388 aa).

Active-site residues include His54 and Asp57. Residues Glu181, Glu217, His220, Asp245, Asp255, Asp257, and Asp287 each contribute to the Mg(2+) site.

It belongs to the xylose isomerase family. Homotetramer. It depends on Mg(2+) as a cofactor.

Its subcellular location is the cytoplasm. It carries out the reaction alpha-D-xylose = alpha-D-xylulofuranose. The protein is Xylose isomerase of Streptomyces corchorusii (Streptomyces chibaensis).